Here is a 347-residue protein sequence, read N- to C-terminus: NADH-ubiquinone oxidoreductase chain 2 (347 aa).

11 helical membrane-spanning segments follow: residues 1-21, 25-45, 59-79, 96-116, 122-142, 149-169, 178-198, 200-220, 237-257, 274-294, and 325-345; these read MNPL…MMVV, HWLL…PIMM, YLLT…INLM, TLMT…FWVP, IPLT…LSIL, INLH…GWGG, IMAY…LYNP, LTLL…MLFI, MPVI…LPPL, DMLI…YFYM, and LLPT…MLSI.

This sequence belongs to the complex I subunit 2 family. As to quaternary structure, core subunit of respiratory chain NADH dehydrogenase (Complex I) which is composed of 45 different subunits. Interacts with TMEM242.

The protein localises to the mitochondrion inner membrane. The enzyme catalyses a ubiquinone + NADH + 5 H(+)(in) = a ubiquinol + NAD(+) + 4 H(+)(out). In terms of biological role, core subunit of the mitochondrial membrane respiratory chain NADH dehydrogenase (Complex I) which catalyzes electron transfer from NADH through the respiratory chain, using ubiquinone as an electron acceptor. Essential for the catalytic activity and assembly of complex I. The protein is NADH-ubiquinone oxidoreductase chain 2 of Balaenoptera physalus (Fin whale).